A 1066-amino-acid polypeptide reads, in one-letter code: TBC1 domain family member 31 (1066 aa).

WD repeat units lie at residues 33–74 (HNTS…LHGN), 75–116 (RFNL…TVTK), 117–157 (ELVS…LDTF), 158–200 (QRKR…CDTL), 201–248 (FCKY…ARQL), 249–296 (FRII…MQTC), and 297–334 (KLLF…NIYS). Positions 424–599 (EYPTKYRMFI…KLFDNIFSNH (176 aa)) constitute a Rab-GAP TBC domain. Coiled coils occupy residues 728 to 861 (QKQE…DLEE) and 914 to 948 (NKCY…KWKE). Residues 989 to 998 (CHKEEPRFQN) show a composition bias toward basic and acidic residues. The segment at 989-1020 (CHKEEPRFQNEQDSSCLPRTSQLNDSSEMDPS) is disordered. Residues 999–1020 (EQDSSCLPRTSQLNDSSEMDPS) show a composition bias toward polar residues. Residues 1053–1056 (RARH) form a mediates direct interaction with PJA2 region.

In terms of assembly, interacts with PJA2; the interaction is direct and recruits PJA2 to centrosomes. Interacts with OFD1; regulates its activity in cilium assembly. Interacts with PRKACA.

It localises to the cytoplasm. It is found in the cytoskeleton. Its subcellular location is the microtubule organizing center. The protein localises to the centrosome. The protein resides in the centriolar satellite. It localises to the cilium basal body. Functionally, molecular adapter which is involved in cilium biogenesis. Part of a functional complex including OFD1 a centriolar protein involved in cilium assembly. Could regulate the cAMP-dependent phosphorylation of OFD1, and its subsequent ubiquitination by PJA2 which ultimately leads to its proteasomal degradation. The chain is TBC1 domain family member 31 from Homo sapiens (Human).